Reading from the N-terminus, the 484-residue chain is Putative myrosinase 6 (484 aa).

N28 carries an N-linked (GlcNAc...) asparagine glycan. Residues Q39, H140, and 184–185 (NQ) each bind a beta-D-glucoside. The cysteines at positions 204 and 207 are disulfide-linked. Residue N260 is glycosylated (N-linked (GlcNAc...) asparagine). Residues Y321, W440, 447–448 (EF), and F456 contribute to the a beta-D-glucoside site. N-linked (GlcNAc...) asparagine glycosylation occurs at N462.

Belongs to the glycosyl hydrolase 1 family.

It carries out the reaction a thioglucoside + H2O = a sugar + a thiol.. This is Putative myrosinase 6 from Arabidopsis thaliana (Mouse-ear cress).